Consider the following 29-residue polypeptide: Cytochrome b6-f complex subunit 8 (29 aa).

The chain crosses the membrane as a helical span at residues 3–23; it reads IVSIAWAALMVVFTFSLSLVV.

It belongs to the PetN family. In terms of assembly, the 4 large subunits of the cytochrome b6-f complex are cytochrome b6, subunit IV (17 kDa polypeptide, PetD), cytochrome f and the Rieske protein, while the 4 small subunits are PetG, PetL, PetM and PetN. The complex functions as a dimer.

It localises to the plastid. The protein localises to the chloroplast thylakoid membrane. In terms of biological role, component of the cytochrome b6-f complex, which mediates electron transfer between photosystem II (PSII) and photosystem I (PSI), cyclic electron flow around PSI, and state transitions. This chain is Cytochrome b6-f complex subunit 8, found in Angiopteris evecta (Mule's foot fern).